We begin with the raw amino-acid sequence, 164 residues long: Large ribosomal subunit protein uL10 (164 aa).

The protein belongs to the universal ribosomal protein uL10 family. Part of the ribosomal stalk of the 50S ribosomal subunit. The N-terminus interacts with L11 and the large rRNA to form the base of the stalk. The C-terminus forms an elongated spine to which L12 dimers bind in a sequential fashion forming a multimeric L10(L12)X complex.

Its function is as follows. Forms part of the ribosomal stalk, playing a central role in the interaction of the ribosome with GTP-bound translation factors. This is Large ribosomal subunit protein uL10 from Photobacterium profundum (strain SS9).